Here is a 776-residue protein sequence, read N- to C-terminus: Transcriptional regulator QRICH1 (776 aa).

Position 1 is an N-acetylmethionine (M1). Residues 6-48 enclose the CARD domain; sequence ENTISFEEYIRVKARSVPQHRMKEFLDSLASKGPEALQEFQQT. Disordered regions lie at residues 139–164 and 218–240; these read IQGQ…PSQL and ALSP…GTAS. Position 345 is a phosphoserine (S345). Residues K353 and K358 each participate in a glycyl lysine isopeptide (Lys-Gly) (interchain with G-Cter in SUMO2) cross-link. Residues 419-429 are compositionally biased toward low complexity; sequence QQQPQQQTPQE. The interval 419–441 is disordered; the sequence is QQQPQQQTPQEQTPPPQQQQQQL. The residue at position 464 (S464) is a Phosphoserine.

It is found in the nucleus. It localises to the cytoplasm. The protein resides in the cell membrane. In terms of biological role, transcriptional regulator that acts as a mediator of the integrated stress response (ISR) through transcriptional control of protein homeostasis under conditions of ER stress. Controls the outcome of the unfolded protein response (UPR) which is an ER-stress response pathway. ER stress induces QRICH1 translation by a ribosome translation re-initiation mechanism in response to EIF2S1/eIF-2-alpha phosphorylation, and stress-induced QRICH1 regulates a transcriptional program associated with protein translation, protein secretion-mediated proteotoxicity and cell death during the terminal UPR. May cooperate with ATF4 transcription factor signaling to regulate ER homeostasis which is critical for cell viability. Up-regulates CASP3/caspase-3 activity in epithelial cells under ER stress. Central regulator of proteotoxicity associated with ER stress-mediated inflammatory diseases in the intestines and liver. Involved in chondrocyte hypertrophy, a process required for normal longitudinal bone growth. This chain is Transcriptional regulator QRICH1, found in Homo sapiens (Human).